Reading from the N-terminus, the 131-residue chain is Large-conductance mechanosensitive channel (131 aa).

The next 3 helical transmembrane spans lie at 8–28 (FAMR…GAFG), 30–50 (IVSS…LGGV), and 67–87 (GMFI…FVFV).

Belongs to the MscL family. Homopentamer.

Its subcellular location is the cell membrane. Functionally, channel that opens in response to stretch forces in the membrane lipid bilayer. May participate in the regulation of osmotic pressure changes within the cell. In Geobacillus sp. (strain WCH70), this protein is Large-conductance mechanosensitive channel.